A 366-amino-acid chain; its full sequence is Transcription factor MYB61 (366 aa).

HTH myb-type domains follow at residues 9–61 (KQKL…INYL) and 62–116 (RPDL…KKKL). 2 consecutive DNA-binding regions (H-T-H motif) follow at residues 37–61 (WSSV…INYL) and 89–112 (WSQI…NSSI). The interval 115 to 164 (KLKQRGIDPNTHKPISEVESFSDKDKPTTSNNKRSGNDHKSPSSSSATNQ) is disordered. Positions 124–141 (NTHKPISEVESFSDKDKP) are enriched in basic and acidic residues.

As to expression, expressed specifically in guard cells. Expressed in sink tissues, such as xylem, roots and developing seeds.

Its subcellular location is the nucleus. Its function is as follows. Transcription factor that coordinates a small network of downstream target genes required for several aspects of plant growth and development, such as xylem formation and xylem cell differentiation, and lateral root formation. Regulates a specific set of target genes by binding DNA to the AC cis-element 5'-ACCTAC-3'. Functions as a transcriptional regulator of stomatal closure. Plays a role the regulation of stomatal pore size independently of abscisic acid (ABA). Required for seed coat mucilage deposition during the development of the seed coat epidermis. Involved in the induction of trichome initiation and branching by positively regulating GL1 and GL2. Required for gibberellin (GA) biosynthesis and degradation by positively affecting the expression of the enzymes that convert GA9 into the bioactive GA4, as well as the enzymes involved in the degradation of GA4. The polypeptide is Transcription factor MYB61 (Arabidopsis thaliana (Mouse-ear cress)).